Consider the following 157-residue polypeptide: SsrA-binding protein (157 aa).

The protein belongs to the SmpB family.

Its subcellular location is the cytoplasm. Functionally, required for rescue of stalled ribosomes mediated by trans-translation. Binds to transfer-messenger RNA (tmRNA), required for stable association of tmRNA with ribosomes. tmRNA and SmpB together mimic tRNA shape, replacing the anticodon stem-loop with SmpB. tmRNA is encoded by the ssrA gene; the 2 termini fold to resemble tRNA(Ala) and it encodes a 'tag peptide', a short internal open reading frame. During trans-translation Ala-aminoacylated tmRNA acts like a tRNA, entering the A-site of stalled ribosomes, displacing the stalled mRNA. The ribosome then switches to translate the ORF on the tmRNA; the nascent peptide is terminated with the 'tag peptide' encoded by the tmRNA and targeted for degradation. The ribosome is freed to recommence translation, which seems to be the essential function of trans-translation. The sequence is that of SsrA-binding protein from Bacillus licheniformis (strain ATCC 14580 / DSM 13 / JCM 2505 / CCUG 7422 / NBRC 12200 / NCIMB 9375 / NCTC 10341 / NRRL NRS-1264 / Gibson 46).